The primary structure comprises 121 residues: Large ribosomal subunit protein bL12 (121 aa).

This sequence belongs to the bacterial ribosomal protein bL12 family. As to quaternary structure, homodimer. Part of the ribosomal stalk of the 50S ribosomal subunit. Forms a multimeric L10(L12)X complex, where L10 forms an elongated spine to which 2 to 4 L12 dimers bind in a sequential fashion. Binds GTP-bound translation factors.

Its function is as follows. Forms part of the ribosomal stalk which helps the ribosome interact with GTP-bound translation factors. Is thus essential for accurate translation. The chain is Large ribosomal subunit protein bL12 from Clostridium beijerinckii (strain ATCC 51743 / NCIMB 8052) (Clostridium acetobutylicum).